The chain runs to 358 residues: Phosphoserine aminotransferase (358 aa).

Arg41 is an L-glutamate binding site. Pyridoxal 5'-phosphate-binding positions include 75-76 (AS), Trp100, Thr148, Asp167, and Gln190. Residue Lys191 is modified to N6-(pyridoxal phosphate)lysine. 233-234 (NT) contacts pyridoxal 5'-phosphate.

The protein belongs to the class-V pyridoxal-phosphate-dependent aminotransferase family. SerC subfamily. Homodimer. Requires pyridoxal 5'-phosphate as cofactor.

Its subcellular location is the cytoplasm. It catalyses the reaction O-phospho-L-serine + 2-oxoglutarate = 3-phosphooxypyruvate + L-glutamate. The catalysed reaction is 4-(phosphooxy)-L-threonine + 2-oxoglutarate = (R)-3-hydroxy-2-oxo-4-phosphooxybutanoate + L-glutamate. Its pathway is amino-acid biosynthesis; L-serine biosynthesis; L-serine from 3-phospho-D-glycerate: step 2/3. It participates in cofactor biosynthesis; pyridoxine 5'-phosphate biosynthesis; pyridoxine 5'-phosphate from D-erythrose 4-phosphate: step 3/5. Catalyzes the reversible conversion of 3-phosphohydroxypyruvate to phosphoserine and of 3-hydroxy-2-oxo-4-phosphonooxybutanoate to phosphohydroxythreonine. The chain is Phosphoserine aminotransferase from Campylobacter jejuni subsp. jejuni serotype O:2 (strain ATCC 700819 / NCTC 11168).